Here is a 247-residue protein sequence, read N- to C-terminus: PF03932 family protein CutC (247 aa).

This sequence belongs to the CutC family.

It localises to the cytoplasm. In Chromobacterium violaceum (strain ATCC 12472 / DSM 30191 / JCM 1249 / CCUG 213 / NBRC 12614 / NCIMB 9131 / NCTC 9757 / MK), this protein is PF03932 family protein CutC.